The chain runs to 273 residues: Shikimate dehydrogenase (NADP(+)) (273 aa).

Shikimate contacts are provided by residues 19–21 (SQS) and Thr66. Residue Lys70 is the Proton acceptor of the active site. Glu82 provides a ligand contact to NADP(+). Asn91 and Asp107 together coordinate shikimate. Residues 131–135 (GAGGA) and Met217 each bind NADP(+). Tyr219 is a binding site for shikimate. An NADP(+)-binding site is contributed by Gly241.

It belongs to the shikimate dehydrogenase family. Homodimer.

It carries out the reaction shikimate + NADP(+) = 3-dehydroshikimate + NADPH + H(+). It participates in metabolic intermediate biosynthesis; chorismate biosynthesis; chorismate from D-erythrose 4-phosphate and phosphoenolpyruvate: step 4/7. Involved in the biosynthesis of the chorismate, which leads to the biosynthesis of aromatic amino acids. Catalyzes the reversible NADPH linked reduction of 3-dehydroshikimate (DHSA) to yield shikimate (SA). The polypeptide is Shikimate dehydrogenase (NADP(+)) (Buchnera aphidicola subsp. Schizaphis graminum (strain Sg)).